Here is a 647-residue protein sequence, read N- to C-terminus: Denticleless protein homolog (647 aa).

7 WD repeats span residues 48–88 (AAAV…KQSS), 95–134 (AHDN…LLGT), 137–177 (GHQC…KDGF), 209–248 (DSQQ…TAYH), 264–303 (TRKL…TTPV), 308–349 (GHSN…QAPM), and 353–393 (GHSQ…EGEN). 2 consecutive short sequence motifs (DDB1-binding motif) follow at residues 167–170 (WDTR) and 238–241 (WDLR). Disordered regions lie at residues 410 to 487 (QSPN…SKSP) and 534 to 647 (KRSR…RTQD). Polar residues-rich tracts occupy residues 426–443 (PSKN…SPQP) and 471–486 (KMPS…SSKS). The segment covering 543 to 558 (LKKEDSFGLESEKRLG) has biased composition (basic and acidic residues). The segment covering 586–600 (KGSAQPKSPSSGSSQ) has biased composition (low complexity).

The protein belongs to the WD repeat cdt2 family. As to quaternary structure, component of the DCX(DTL) E3 ubiquitin ligase complex, at least composed of cul4 (cul4a or cul4b), ddb1, dtl/cdt2 and rbx1.

The protein localises to the nucleus. It is found in the cytoplasm. It localises to the cytoskeleton. The protein resides in the microtubule organizing center. Its subcellular location is the centrosome. The protein localises to the chromosome. It participates in protein modification; protein ubiquitination. Functionally, substrate-specific adapter of a DCX (DDB1-CUL4-X-box) E3 ubiquitin-protein ligase complex required for cell cycle control, DNA damage response and translesion DNA synthesis. The DCX(DTL) complex, also named CRL4(CDT2) complex, mediates the polyubiquitination and subsequent degradation of CDT1, CDKN1A/p21(CIP1), KMT5A and SDE2. CDT1 degradation in response to DNA damage is necessary to ensure proper cell cycle regulation of DNA replication. CDKN1A/p21(CIP1) degradation during S phase or following UV irradiation is essential to control replication licensing. KMT5A degradation is also important for a proper regulation of mechanisms such as TGF-beta signaling, cell cycle progression, DNA repair and cell migration. Most substrates require their interaction with PCNA for their polyubiquitination: substrates interact with PCNA via their PIP-box, and those containing the 'K+4' motif in the PIP box, recruit the DCX(DTL) complex, leading to their degradation. In undamaged proliferating cells, the DCX(DTL) complex also promotes the 'Lys-164' monoubiquitination of PCNA, thereby being involved in PCNA-dependent translesion DNA synthesis. May play a role in the regulation of the circadian clock. The polypeptide is Denticleless protein homolog (dtl) (Danio rerio (Zebrafish)).